The chain runs to 379 residues: Alkanesulfonate monooxygenase (379 aa).

Belongs to the SsuD family.

It carries out the reaction an alkanesulfonate + FMNH2 + O2 = an aldehyde + FMN + sulfite + H2O + 2 H(+). Its function is as follows. Catalyzes the desulfonation of aliphatic sulfonates. This is Alkanesulfonate monooxygenase from Sorangium cellulosum (strain So ce56) (Polyangium cellulosum (strain So ce56)).